The sequence spans 503 residues: Cytochrome P450 11B1, mitochondrial (503 aa).

Residues 1–24 (MAIWAKAEAWLAGPWLALNRARTL) constitute a mitochondrion transit peptide. Residue C450 participates in heme binding.

The protein belongs to the cytochrome P450 family. The cofactor is heme.

It is found in the mitochondrion inner membrane. The catalysed reaction is a steroid + 2 reduced [adrenodoxin] + O2 + 2 H(+) = an 11beta-hydroxysteroid + 2 oxidized [adrenodoxin] + H2O. It catalyses the reaction 11-deoxycortisol + 2 reduced [adrenodoxin] + O2 + 2 H(+) = cortisol + 2 oxidized [adrenodoxin] + H2O. The enzyme catalyses 21-hydroxyprogesterone + 2 reduced [adrenodoxin] + O2 + 2 H(+) = corticosterone + 2 oxidized [adrenodoxin] + H2O. It carries out the reaction corticosterone + 2 reduced [adrenodoxin] + O2 + 2 H(+) = 18-hydroxycorticosterone + 2 oxidized [adrenodoxin] + H2O. The catalysed reaction is 18-hydroxycorticosterone + 2 reduced [adrenodoxin] + O2 + 2 H(+) = aldosterone + 2 oxidized [adrenodoxin] + 2 H2O. It catalyses the reaction 21-hydroxyprogesterone + 2 reduced [adrenodoxin] + O2 + 2 H(+) = 19-hydroxy-11-deoxycorticosterone + 2 oxidized [adrenodoxin] + H2O. The enzyme catalyses 19-hydroxy-11-deoxycorticosterone + 2 reduced [adrenodoxin] + O2 + 2 H(+) = 19-oxo-11-deoxycorticosterone + 2 oxidized [adrenodoxin] + 2 H2O. It participates in steroid biosynthesis; glucocorticoid biosynthesis. It functions in the pathway steroid hormone biosynthesis. In terms of biological role, a cytochrome P450 monooxygenase that catalyzes the biosynthesis of aldosterone and other adrenal corticoids. Differing from other species (such as human, rat and mice), it is able to catalyze three sequential oxidative reactions of 11-deoxycorticosterone (21-hydroxyprogesterone), namely 11-beta hydroxylation, followed by two successive oxidations at C18 yielding 18-hydroxy and then 18-oxo intermediates, and ending with the formation of aldosterone. Steroid 11beta, 18- and 19-hydroxylase. Mechanistically, uses molecular oxygen inserting one oxygen atom into a substrate and reducing the second into a water molecule. Two electrons are provided by NADPH via a two-protein mitochondrial transfer system comprising flavoprotein FDXR (adrenodoxin/ferredoxin reductase) and nonheme iron-sulfur protein FDX1 or FDX2 (adrenodoxin/ferredoxin). The protein is Cytochrome P450 11B1, mitochondrial (CYP11B1) of Sus scrofa (Pig).